A 184-amino-acid chain; its full sequence is Pyridoxal 5'-phosphate synthase subunit PdxT (184 aa).

46-48 (GES) lines the L-glutamine pocket. Cysteine 75 (nucleophile) is an active-site residue. Residues arginine 101 and 129–130 (IR) each bind L-glutamine. Catalysis depends on charge relay system residues histidine 165 and glutamate 167.

Belongs to the glutaminase PdxT/SNO family. As to quaternary structure, in the presence of PdxS, forms a dodecamer of heterodimers. Only shows activity in the heterodimer.

It carries out the reaction aldehydo-D-ribose 5-phosphate + D-glyceraldehyde 3-phosphate + L-glutamine = pyridoxal 5'-phosphate + L-glutamate + phosphate + 3 H2O + H(+). The enzyme catalyses L-glutamine + H2O = L-glutamate + NH4(+). It participates in cofactor biosynthesis; pyridoxal 5'-phosphate biosynthesis. In terms of biological role, catalyzes the hydrolysis of glutamine to glutamate and ammonia as part of the biosynthesis of pyridoxal 5'-phosphate. The resulting ammonia molecule is channeled to the active site of PdxS. The polypeptide is Pyridoxal 5'-phosphate synthase subunit PdxT (Staphylococcus haemolyticus (strain JCSC1435)).